The following is a 455-amino-acid chain: Pentatricopeptide repeat-containing protein At3g26630, chloroplastic (455 aa).

Residues 1–19 (MAAPSPSSPPNLLSPPPFR) constitute a chloroplast transit peptide. PPR repeat units lie at residues 51–81 (DQLL…LQSP), 82–117 (STFT…QSQF), 118–152 (DKFT…GFFN), 153–187 (DVFF…SIVS), 188–214 (WTTM…MPMR), 215–249 (NVVS…DVKP), 250–284 (NEFT…GFVL), 285–315 (DCFL…MQGK), 316–350 (SLAT…ASVE), 352–387 (DAIT…GISP), and 388–418 (IREH…MDSD).

The protein belongs to the PPR family. PCMP-A subfamily.

Its subcellular location is the plastid. It is found in the chloroplast. In Arabidopsis thaliana (Mouse-ear cress), this protein is Pentatricopeptide repeat-containing protein At3g26630, chloroplastic (PCMP-A6).